A 500-amino-acid polypeptide reads, in one-letter code: L-arabinose isomerase (500 aa).

The Mn(2+) site is built by E306, E333, H350, and H450.

Belongs to the arabinose isomerase family. In terms of assembly, homohexamer. Mn(2+) serves as cofactor.

It carries out the reaction beta-L-arabinopyranose = L-ribulose. It participates in carbohydrate degradation; L-arabinose degradation via L-ribulose; D-xylulose 5-phosphate from L-arabinose (bacterial route): step 1/3. Its function is as follows. Catalyzes the conversion of L-arabinose to L-ribulose. The protein is L-arabinose isomerase of Escherichia fergusonii (strain ATCC 35469 / DSM 13698 / CCUG 18766 / IAM 14443 / JCM 21226 / LMG 7866 / NBRC 102419 / NCTC 12128 / CDC 0568-73).